The following is a 286-amino-acid chain: Diaminopimelate epimerase (286 aa).

Positions 12 and 67 each coordinate substrate. Cysteine 76 functions as the Proton donor in the catalytic mechanism. Substrate-binding positions include 77–78 (GN), asparagine 165, asparagine 198, and 216–217 (ER). Residue cysteine 225 is the Proton acceptor of the active site. 226-227 (GT) provides a ligand contact to substrate.

Belongs to the diaminopimelate epimerase family. In terms of assembly, homodimer.

Its subcellular location is the cytoplasm. The catalysed reaction is (2S,6S)-2,6-diaminopimelate = meso-2,6-diaminopimelate. It functions in the pathway amino-acid biosynthesis; L-lysine biosynthesis via DAP pathway; DL-2,6-diaminopimelate from LL-2,6-diaminopimelate: step 1/1. Catalyzes the stereoinversion of LL-2,6-diaminopimelate (L,L-DAP) to meso-diaminopimelate (meso-DAP), a precursor of L-lysine. The chain is Diaminopimelate epimerase from Methanothermobacter thermautotrophicus (strain ATCC 29096 / DSM 1053 / JCM 10044 / NBRC 100330 / Delta H) (Methanobacterium thermoautotrophicum).